A 470-amino-acid polypeptide reads, in one-letter code: V-type proton ATPase subunit S1 (470 aa).

The signal sequence occupies residues 1–41 (MMAAMATARVRMGPRCAQALWRMPWLPVFLSLAAAAAAAAA). A propeptide spanning residues 42-231 (EQQVPLVLWS…TAVRPSRVAR (190 aa)) is cleaved from the precursor. Topologically, residues 42–419 (EQQVPLVLWS…EQFSYASDCA (378 aa)) are lumenal. Residues Asn-170, Asn-261, Asn-273, Asn-296, Asn-303, Asn-350, and Asn-357 are each glycosylated (N-linked (GlcNAc...) asparagine). Cys-371 and Cys-418 form a disulfide bridge. A helical transmembrane segment spans residues 420–440 (SFFSPGIWMGLLTSLFMLFIF). At 441-470 (TYGLHMILSLKTMDRFDDHKGPTISLTQIV) the chain is on the cytoplasmic side. The residue at position 465 (Ser-465) is a Phosphoserine.

It belongs to the vacuolar ATPase subunit S1 family. As to quaternary structure, accessory component of the multisubunit proton-transporting vacuolar (V)-ATPase protein pump. Interacts (via N-terminus) with ATP6AP2 (via N-terminus). Interacts with RNASEK. Interacts with TMEM106B (via C-terminus). In terms of processing, N-glycosylated. As to expression, widely expressed, with highest levels in brain and lowest in liver and duodenum.

It localises to the endoplasmic reticulum membrane. It is found in the endoplasmic reticulum-Golgi intermediate compartment membrane. The protein resides in the cytoplasmic vesicle. The protein localises to the secretory vesicle. Its subcellular location is the synaptic vesicle membrane. It localises to the clathrin-coated vesicle membrane. Its function is as follows. Accessory subunit of the proton-transporting vacuolar (V)-ATPase protein pump, which is required for luminal acidification of secretory vesicles. Guides the V-type ATPase into specialized subcellular compartments, such as neuroendocrine regulated secretory vesicles or the ruffled border of the osteoclast, thereby regulating its activity. Involved in membrane trafficking and Ca(2+)-dependent membrane fusion. May play a role in the assembly of the V-type ATPase complex. In aerobic conditions, involved in intracellular iron homeostasis, thus triggering the activity of Fe(2+) prolyl hydroxylase (PHD) enzymes, and leading to HIF1A hydroxylation and subsequent proteasomal degradation. In islets of Langerhans cells, may regulate the acidification of dense-core secretory granules. The protein is V-type proton ATPase subunit S1 (ATP6AP1) of Homo sapiens (Human).